The primary structure comprises 426 residues: Vitamin D3 receptor (426 aa).

A DNA-binding region (nuclear receptor) is located at residues 21–96 (PRICGVCGDR…IGMMKEFILT (76 aa)). Cys24, Cys27, Cys41, Cys44, Cys60, Cys66, Cys76, and Cys79 together coordinate Zn(2+). 2 consecutive NR C4-type zinc fingers follow at residues 24–44 (CGVC…CEGC) and 60–84 (CPFN…LKRC). The interval 97–126 (DEEVQRKREMILKRKEEEALKDSLRPKLSE) is hinge. One can recognise an NR LBD domain in the interval 127-422 (EQQRIITTLL…LTPLLFEVFG (296 aa)). Tyr143 serves as a coordination point for calcitriol. A disordered region spans residues 147–215 (YSDFSQFRPP…NEEDSDDPSV (69 aa)). Positions 175–191 (SFSGNSSSSCSDHCTSS) are enriched in low complexity. A compositionally biased stretch (polar residues) spans 192-204 (PDTMEPTSFSNQD). Calcitriol is bound at residue Ser235. The tract at residues 244–262 (KMIPGFRDLTPEDQIVLLK) is interaction with coactivator LXXLL motif. 4 residues coordinate calcitriol: Arg272, Ser276, His304, and His396. Positions 415–423 (PLLFEVFGN) match the 9aaTAD motif.

It belongs to the nuclear hormone receptor family. NR1 subfamily. Homodimer in the absence of bound vitamin D3. Heterodimer with RXRA after vitamin D3 binding. Interacts with MED1, NCOA1, NCOA2, NCOA3 and NCOA6 coactivators, leading to a strong increase of transcription of target genes. Interacts with the corepressor NCOR1. Interacts with SNW1. Interacts with IRX4, the interaction does not affect its transactivation activity. Interacts with CRY1. Interacts with CRY2 in a ligand-dependent manner. In terms of processing, ubiquitinated by UBR5, leading to its degradation: UBR5 specifically recognizes and binds ligand-bound VDR when it is not associated with coactivators (NCOAs). In presence of NCOAs, the UBR5-degron is not accessible, preventing its ubiquitination and degradation. As to expression, mammary gland, expression increases during lactation. Also found in colon, expression is down-regulated at parturition.

It is found in the nucleus. It localises to the cytoplasm. In terms of biological role, nuclear receptor for calcitriol, the active form of vitamin D3 which mediates the action of this vitamin on cells. Enters the nucleus upon vitamin D3 binding where it forms heterodimers with the retinoid X receptor/RXR. The VDR-RXR heterodimers bind to specific response elements on DNA and activate the transcription of vitamin D3-responsive target genes. Plays a central role in calcium homeostasis. Also functions as a receptor for the secondary bile acid lithocholic acid (LCA) and its metabolites. This is Vitamin D3 receptor (VDR) from Bos taurus (Bovine).